The chain runs to 32 residues: Putative leucine-rich repeat protein PS14 (32 aa).

This is Putative leucine-rich repeat protein PS14 from Pinus strobus (Eastern white pine).